Consider the following 426-residue polypeptide: Glutamate-1-semialdehyde 2,1-aminomutase (426 aa).

K265 carries the post-translational modification N6-(pyridoxal phosphate)lysine.

This sequence belongs to the class-III pyridoxal-phosphate-dependent aminotransferase family. HemL subfamily. Homodimer. Requires pyridoxal 5'-phosphate as cofactor.

The protein localises to the cytoplasm. The enzyme catalyses (S)-4-amino-5-oxopentanoate = 5-aminolevulinate. It functions in the pathway porphyrin-containing compound metabolism; protoporphyrin-IX biosynthesis; 5-aminolevulinate from L-glutamyl-tRNA(Glu): step 2/2. The sequence is that of Glutamate-1-semialdehyde 2,1-aminomutase from Escherichia coli O157:H7.